The sequence spans 330 residues: DNA-directed RNA polymerase subunit alpha (330 aa).

The segment at 1–232 is alpha N-terminal domain (alpha-NTD); that stretch reads MAILAFQKPD…YHFMLFSDEK (232 aa). The interval 248 to 330 is alpha C-terminal domain (alpha-CTD); that stretch reads EEVLHMRQLL…DISKYKLDKE (83 aa).

The protein belongs to the RNA polymerase alpha chain family. In terms of assembly, homodimer. The RNAP catalytic core consists of 2 alpha, 1 beta, 1 beta' and 1 omega subunit. When a sigma factor is associated with the core the holoenzyme is formed, which can initiate transcription.

The enzyme catalyses RNA(n) + a ribonucleoside 5'-triphosphate = RNA(n+1) + diphosphate. Functionally, DNA-dependent RNA polymerase catalyzes the transcription of DNA into RNA using the four ribonucleoside triphosphates as substrates. In Bacteroides fragilis (strain ATCC 25285 / DSM 2151 / CCUG 4856 / JCM 11019 / LMG 10263 / NCTC 9343 / Onslow / VPI 2553 / EN-2), this protein is DNA-directed RNA polymerase subunit alpha.